The primary structure comprises 101 residues: Aspartyl/glutamyl-tRNA(Asn/Gln) amidotransferase subunit C (101 aa).

Belongs to the GatC family. In terms of assembly, heterotrimer of A, B and C subunits.

The catalysed reaction is L-glutamyl-tRNA(Gln) + L-glutamine + ATP + H2O = L-glutaminyl-tRNA(Gln) + L-glutamate + ADP + phosphate + H(+). It catalyses the reaction L-aspartyl-tRNA(Asn) + L-glutamine + ATP + H2O = L-asparaginyl-tRNA(Asn) + L-glutamate + ADP + phosphate + 2 H(+). In terms of biological role, allows the formation of correctly charged Asn-tRNA(Asn) or Gln-tRNA(Gln) through the transamidation of misacylated Asp-tRNA(Asn) or Glu-tRNA(Gln) in organisms which lack either or both of asparaginyl-tRNA or glutaminyl-tRNA synthetases. The reaction takes place in the presence of glutamine and ATP through an activated phospho-Asp-tRNA(Asn) or phospho-Glu-tRNA(Gln). The protein is Aspartyl/glutamyl-tRNA(Asn/Gln) amidotransferase subunit C of Lactococcus lactis subsp. cremoris (strain MG1363).